A 370-amino-acid chain; its full sequence is NADH-quinone oxidoreductase subunit D (370 aa).

It belongs to the complex I 49 kDa subunit family. NDH-1 is composed of 14 different subunits. Subunits NuoB, C, D, E, F, and G constitute the peripheral sector of the complex.

It is found in the cell membrane. The enzyme catalyses a quinone + NADH + 5 H(+)(in) = a quinol + NAD(+) + 4 H(+)(out). NDH-1 shuttles electrons from NADH, via FMN and iron-sulfur (Fe-S) centers, to quinones in the respiratory chain. The immediate electron acceptor for the enzyme in this species is believed to be a menaquinone. Couples the redox reaction to proton translocation (for every two electrons transferred, four hydrogen ions are translocated across the cytoplasmic membrane), and thus conserves the redox energy in a proton gradient. The chain is NADH-quinone oxidoreductase subunit D from Clostridium beijerinckii (strain ATCC 51743 / NCIMB 8052) (Clostridium acetobutylicum).